Here is a 138-residue protein sequence, read N- to C-terminus: Small ribosomal subunit protein uS12 (138 aa).

The span at methionine 1–proline 22 shows a compositional bias: polar residues. The segment at methionine 1 to glycine 45 is disordered. Aspartate 102 carries the post-translational modification 3-methylthioaspartic acid.

This sequence belongs to the universal ribosomal protein uS12 family. As to quaternary structure, part of the 30S ribosomal subunit. Contacts proteins S8 and S17. May interact with IF1 in the 30S initiation complex.

In terms of biological role, with S4 and S5 plays an important role in translational accuracy. Functionally, interacts with and stabilizes bases of the 16S rRNA that are involved in tRNA selection in the A site and with the mRNA backbone. Located at the interface of the 30S and 50S subunits, it traverses the body of the 30S subunit contacting proteins on the other side and probably holding the rRNA structure together. The combined cluster of proteins S8, S12 and S17 appears to hold together the shoulder and platform of the 30S subunit. This chain is Small ribosomal subunit protein uS12, found in Lacticaseibacillus paracasei (strain ATCC 334 / BCRC 17002 / CCUG 31169 / CIP 107868 / KCTC 3260 / NRRL B-441) (Lactobacillus paracasei).